A 490-amino-acid polypeptide reads, in one-letter code: Tryptophan decarboxylase (490 aa).

Lys306 bears the N6-(pyridoxal phosphate)lysine mark.

It belongs to the group II decarboxylase family. Homodimer. Pyridoxal 5'-phosphate is required as a cofactor.

Its subcellular location is the cytoplasm. The enzyme catalyses L-tryptophan + H(+) = tryptamine + CO2. Inhibited by (S)-alpha-fluoromethyltryptophan. Functionally, catalyzes the decarboxylation of tryptophan to tryptamine. Tryptamine is a neurotransmitter that induces the release of serotonin, which is suggested to modulate gastrointestinal motility. Therefore, the tryptophan decarboxylase from the gut bacteria Ruminococcus gnavus (strain ATCC 29149 / VPI C7-9) may influence host brain and behavior. Has weak activity with tyrosine and phenylalanine. The chain is Tryptophan decarboxylase from Mediterraneibacter gnavus (strain ATCC 29149 / DSM 114966 / JCM 6515 / VPI C7-9) (Ruminococcus gnavus).